Consider the following 41-residue polypeptide: Cytochrome b559 subunit beta (41 aa).

A helical membrane pass occupies residues 16–32 (WLAVHALAVPTVFFLGA). Histidine 20 lines the heme pocket.

Belongs to the PsbE/PsbF family. As to quaternary structure, heterodimer of an alpha subunit and a beta subunit. PSII is composed of 1 copy each of membrane proteins PsbA, PsbB, PsbC, PsbD, PsbE, PsbF, PsbH, PsbI, PsbJ, PsbK, PsbL, PsbM, PsbT, PsbX, PsbY, PsbZ, Psb30/Ycf12, at least 3 peripheral proteins of the oxygen-evolving complex and a large number of cofactors. It forms dimeric complexes. It depends on heme b as a cofactor.

It localises to the plastid. It is found in the chloroplast thylakoid membrane. In terms of biological role, this b-type cytochrome is tightly associated with the reaction center of photosystem II (PSII). PSII is a light-driven water:plastoquinone oxidoreductase that uses light energy to abstract electrons from H(2)O, generating O(2) and a proton gradient subsequently used for ATP formation. It consists of a core antenna complex that captures photons, and an electron transfer chain that converts photonic excitation into a charge separation. The chain is Cytochrome b559 subunit beta from Chlorella vulgaris (Green alga).